Here is a 977-residue protein sequence, read N- to C-terminus: Protein bric-a-brac 1 (977 aa).

The interval 1 to 97 (MASAQAETNV…RSSSVASPSS (97 aa)) is disordered. Polar residues predominate over residues 34 to 43 (PKSNRSSPTQ). Residues 44–69 (QEEKRIKSEDRTSPTGGAKDEDKESQ) are compositionally biased toward basic and acidic residues. The span at 80–97 (SPVSSPQGRSSSVASPSS) shows a compositional bias: low complexity. Residues 127 to 192 (VDVTLACDGR…MYRGEINVSQ (66 aa)) form the BTB domain. 4 disordered regions span residues 221–249 (AAAA…HDRE), 281–348 (ERQQ…GSTV), 362–434 (DMPS…RFPL), and 447–497 (SGLG…ADDL). A compositionally biased stretch (basic and acidic residues) spans 316-330 (ERMELEQKERERQRD). Low complexity predominate over residues 372–396 (PLSRSSRPHSQSPQQQQAQQQGQLP). A compositionally biased stretch (gly residues) spans 469 to 491 (GGGVGGGGVGGGGAGGVGSGGGS). The HTH psq-type domain occupies 559-611 (FRERGPLKSWRPETMAEAIFSVLKEGLSLSQAARKYDIPYPTFVLYANRVHNM). Residues 569–614 (RPETMAEAIFSVLKEGLSLSQAARKYDIPYPTFVLYANRVHNMLGP) constitute a DNA-binding region (H-T-H motif). The a.T hook DNA-binding region spans 621 to 632 (DLRPKGRGRPQR). 2 disordered regions span residues 772-900 (ASIS…LGDL) and 925-977 (VGAS…TTSE). 4 stretches are compositionally biased toward low complexity: residues 804–816 (MAVA…QQQA), 838–853 (QQQQ…GGHQ), 862–872 (ASSSSSASSSS), and 925–966 (VGAS…SSGG).

Leg imaginal disk at the central region of the tarsus and in eye antenna disk at the basal cylinder.

The protein resides in the nucleus. Functionally, probably acts as a transcriptional regulator. Required for the specification of the tarsal segment. Also involved in antenna development. The protein is Protein bric-a-brac 1 (bab1) of Drosophila melanogaster (Fruit fly).